The primary structure comprises 447 residues: Tubulin beta-1 chain (447 aa).

Positions 11, 69, 138, 142, 143, 144, 204, and 226 each coordinate GTP. Glutamate 69 contributes to the Mg(2+) binding site.

The protein belongs to the tubulin family. As to quaternary structure, dimer of alpha and beta chains. A typical microtubule is a hollow water-filled tube with an outer diameter of 25 nm and an inner diameter of 15 nM. Alpha-beta heterodimers associate head-to-tail to form protofilaments running lengthwise along the microtubule wall with the beta-tubulin subunit facing the microtubule plus end conferring a structural polarity. Microtubules usually have 13 protofilaments but different protofilament numbers can be found in some organisms and specialized cells. Mg(2+) serves as cofactor.

It localises to the cytoplasm. It is found in the cytoskeleton. Tubulin is the major constituent of microtubules, a cylinder consisting of laterally associated linear protofilaments composed of alpha- and beta-tubulin heterodimers. Microtubules grow by the addition of GTP-tubulin dimers to the microtubule end, where a stabilizing cap forms. Below the cap, tubulin dimers are in GDP-bound state, owing to GTPase activity of alpha-tubulin. This chain is Tubulin beta-1 chain (benA), found in Emericella nidulans (strain FGSC A4 / ATCC 38163 / CBS 112.46 / NRRL 194 / M139) (Aspergillus nidulans).